Reading from the N-terminus, the 775-residue chain is Armadillo-like helical domain-containing protein 4 (775 aa).

A signal peptide spans 1–47 (MLQDSITGIVNSFNLFFPSTMSRPTLMPTCVAFCSILFLTLATGCQA). Topologically, residues 48-715 (FPKVERRETA…KDKAGYMSGM (668 aa)) are extracellular. N76 carries N-linked (GlcNAc...) asparagine glycosylation. Disordered regions lie at residues 120 to 148 (AGLL…PGPS), 247 to 273 (VPGV…DGQS), and 324 to 366 (KFES…PSST). Residues 129 to 142 (GVYSSSEPVVSASE) are compositionally biased toward polar residues. Over residues 324-335 (KFESISRGRPPE) the composition is skewed to basic and acidic residues. The N-linked (GlcNAc...) asparagine glycan is linked to N476. A disordered region spans residues 559–669 (IPVLGSPMAP…PGITSQEPDI (111 aa)). Residues 577-599 (TISSALPSEGRTSPSISRPNTAA) are compositionally biased toward polar residues. Positions 606–640 (LESEEVEDDEDEEDEEDEEEEEEDEEDEEDEEDKE) are enriched in acidic residues. Residues 716–736 (LVPVGVGIAGALFILGALYSI) form a helical membrane-spanning segment. Residues 737-775 (KVMNRRRRNGFKRHKRKQREFNSMQDRVMLLADSSEDEF) lie on the Cytoplasmic side of the membrane. A phosphoserine mark is found at S770 and S771.

As to quaternary structure, interacts with IL6ST; this interaction prevents IL6ST protein homodimerization and bridges ARMH4 with IL6R and STAT3 and therefore inhibits phosphorylation of STAT3 at 'Tyr-705'. Interacts (via cytoplasmic tail) with RICTOR; this interaction bridges ARMH4 to the mTORC2 complex and inhibits the mTORC2 kinase activity. As to expression, expressed in bone-marroew cells.

The protein localises to the membrane. In terms of biological role, may modulate immune response and may play a role in inflammation. Down-modulates STAT3 signaling throught direct interaction with IL6ST, resulting in the inhibition of phosphorylation of STAT3 at 'Tyr-705'. May negatively regulates AKT signaling by modulating the activity of mTORC2 complex through RICTOR interaction. The polypeptide is Armadillo-like helical domain-containing protein 4 (Mus musculus (Mouse)).